The sequence spans 97 residues: Type 1 phosphatases regulator YPI2 (97 aa).

A disordered region spans residues 1 to 97 (MNKKKTKICC…KMMEKKSNNT (97 aa)). Basic and acidic residues predominate over residues 43-53 (ENDKDLGFDER). Residues 54–65 (RKRRVERRRRKL) are compositionally biased toward basic residues.

The protein belongs to the YPI1 family.

Its subcellular location is the nucleus. Functionally, regulator of type 1 phosphatases which maintains protein phosphatase activity under strict control. This Vanderwaltozyma polyspora (strain ATCC 22028 / DSM 70294 / BCRC 21397 / CBS 2163 / NBRC 10782 / NRRL Y-8283 / UCD 57-17) (Kluyveromyces polysporus) protein is Type 1 phosphatases regulator YPI2 (YPI2).